The primary structure comprises 243 residues: tRNA pseudouridine synthase A (243 aa).

The Nucleophile role is filled by Asp-51. Tyr-111 contributes to the substrate binding site.

It belongs to the tRNA pseudouridine synthase TruA family. Homodimer.

It catalyses the reaction uridine(38/39/40) in tRNA = pseudouridine(38/39/40) in tRNA. In terms of biological role, formation of pseudouridine at positions 38, 39 and 40 in the anticodon stem and loop of transfer RNAs. The protein is tRNA pseudouridine synthase A of Neorickettsia sennetsu (strain ATCC VR-367 / Miyayama) (Ehrlichia sennetsu).